The chain runs to 529 residues: Putative inorganic phosphate cotransporter (529 aa).

8 helical membrane-spanning segments follow: residues 37–57, 110–130, 148–168, 202–222, 232–252, 338–358, 429–449, and 466–486; these read FATR…AYVM, YILS…GILA, VFAF…LCAV, AVYA…GLLA, SIFY…LIFV, LPYL…DWMI, FLMS…PIAA, and IVFF…NIFG. The disordered stretch occupies residues 495–529; the sequence is NPEDDEQKPALQTTVTTSPARLSNGSTAPAAISSS. A compositionally biased stretch (polar residues) spans 504–529; it reads ALQTTVTTSPARLSNGSTAPAAISSS.

Belongs to the major facilitator superfamily. Sodium/anion cotransporter family.

The protein resides in the membrane. Its function is as follows. May be an inorganic phosphate cotransporter. The chain is Putative inorganic phosphate cotransporter (Picot) from Drosophila melanogaster (Fruit fly).